The chain runs to 960 residues: Collagenase ColA (960 aa).

A signal peptide spans 1–30 (MNKNLRFTQMMIGISTMALSFGSIQTQVSA). A propeptide spanning residues 31–92 (EETAPYNILQ…KRDEIQLKQS (62 aa)) is cleaved from the precursor. The tract at residues 93–365 (YTLAELNKMP…AVEQMKTNYG (273 aa)) is activator domain. Positions 93-764 (YTLAELNKMP…VFHGVATEEK (672 aa)) are S1 metalloprotease domain. Residues 375–644 (DLQKIREEGK…MQQLIDNQDK (270 aa)) are catalytic subdomain. Residue histidine 500 coordinates Zn(2+). Glutamate 501 is an active-site residue. Residues histidine 504 and glutamate 532 each coordinate Zn(2+). The helper subdomain stretch occupies residues 652–764 (NDYLIQHAPK…VFHGVATEEK (113 aa)). The PKD domain maps to 768–849 (TTIVNMNGPY…ESKEQTKVTV (82 aa)). A compositionally biased stretch (basic and acidic residues) spans 836-845 (SRGKESKEQT). Residues 836–859 (SRGKESKEQTKVTVKQDPQTSESY) are disordered. The segment covering 846-857 (KVTVKQDPQTSE) has biased composition (polar residues). A collagen-binding domain region spans residues 852-960 (DPQTSESYEE…KNGEYSLLVK (109 aa)).

The protein belongs to the peptidase M9B family. Collagenase subfamily. It depends on Ca(2+) as a cofactor. Zn(2+) is required as a cofactor.

It localises to the secreted. The catalysed reaction is Digestion of native collagen in the triple helical region at Xaa-|-Gly bonds. With synthetic peptides, a preference is shown for Gly at P3 and P1', Pro and Ala at P2 and P2', and hydroxyproline, Ala or Arg at P3'.. Functionally, acts as a true collagenase, which is highly active and efficiently targets native tropocollagen. In vitro, can also cleave gelatin and the synthetic peptide FALGPA (furylacryloyl-Leu-Gly-Pro-Ala). May contribute to bacterial virulence in endophthalmitis or opportunistic infections via collagen degradation in the host extracellular matrix (ECM). This Bacillus cereus (strain ATCC 14579 / DSM 31 / CCUG 7414 / JCM 2152 / NBRC 15305 / NCIMB 9373 / NCTC 2599 / NRRL B-3711) protein is Collagenase ColA.